The sequence spans 386 residues: V-type proton ATPase subunit B 2 (386 aa).

It belongs to the ATPase alpha/beta chains family. As to quaternary structure, V-ATPase is a heteromultimeric enzyme composed of a peripheral catalytic V1 complex (main components: subunits A, B, C, D, E, and F) attached to an integral membrane V0 proton pore complex (main component: the proteolipid protein).

Non-catalytic subunit of the peripheral V1 complex of vacuolar ATPase. V-ATPase is responsible for acidifying a variety of intracellular compartments in eukaryotic cells. In Gossypium hirsutum (Upland cotton), this protein is V-type proton ATPase subunit B 2.